The following is a 725-amino-acid chain: MTLAMAEQIATADNPAFVVVSDAAGRMRIQIEWVRSNPRRAVTVEEAIAKCNGVRVVHAYPRTGSVVVWYSPRCCDRQSILAAISGAAHVAAELIPTRAPHSSDIRNIEVLRMAIGAAALTLLGVRRYVFARPLLLPTTSRLVASGVTIFTGYPFLRGALRFGKTGTDALVSVATIASLILRENVVALAVLWLLNIGEYLQDLTLRRTRRAISALLSGTQDTAWIRLTDGPQAGTEIQVPIGTVQIGDEVVVHEHVAIPVDGEVIDGEAVVNQSAITGENLPVSVMAGSHVHAGSVVVRGRLMVRASAVGKHTTIGRIVTRVEEAQHDRAPIQTVGENFSRCFVPTSFVVSAITLAITKDVRRTMTVLLIACPCAVGLATPTAISAAIGNGARRGILIKGGSHLEQAGRVDAILFDKTGTLTVGRPVVTNIVAMHKDWSPEQVLAYAASSEIHSRHPLAEAVIRSTEERHISIPPHEECEVLVGLGMRTWADGRTLLLGSPSLLCAEKVKVSKTASEWVDKLRHQTETPLLFAVDGTLVGLISLRDEVRPEAAEVLTKLRASGVRRIVMLTGDHPDIAKAVATELGIDEWRAEVMPEDKLKVVRDLQNEGYVVGMVGDGVNDAPALAAADIGIAMGLAGTDVAVETADVALANDDLNRLLDVRDLGGRAVEVIRENYGMSIAVNAAGLFIGAGGALSPVLAAVLHNASSVAVVANSSRLIRYRLD.

Residues 25–92 form the HMA domain; it reads GRMRIQIEWV…AISGAAHVAA (68 aa). Helical transmembrane passes span 101 to 119, 142 to 160, 165 to 179, 188 to 202, 335 to 359, and 365 to 383; these read HSSD…GAAA, LVAS…RGAL, TGTD…IASL, LAVL…YLQD, VGEN…AITK, and MTVL…TPTA. The active-site 4-aspartylphosphate intermediate is aspartate 416. Mg(2+)-binding residues include aspartate 416, threonine 418, and aspartate 618. The next 2 membrane-spanning stretches (helical) occupy residues 669-688 and 698-717; these read AVEV…AAGL and PVLA…ANSS.

Belongs to the cation transport ATPase (P-type) (TC 3.A.3) family. Type IB subfamily.

It localises to the cell membrane. The catalysed reaction is Mn(2+)(in) + ATP + H2O = Mn(2+)(out) + ADP + phosphate + H(+). Functionally, high affinity, slow turnover Mn(2+) transporting ATPase. The sequence is that of Manganese-exporting P-type ATPase (ctpC) from Mycobacterium leprae (strain TN).